Here is a 94-residue protein sequence, read N- to C-terminus: Aspartyl/glutamyl-tRNA(Asn/Gln) amidotransferase subunit C (94 aa).

It belongs to the GatC family. In terms of assembly, heterotrimer of A, B and C subunits.

The enzyme catalyses L-glutamyl-tRNA(Gln) + L-glutamine + ATP + H2O = L-glutaminyl-tRNA(Gln) + L-glutamate + ADP + phosphate + H(+). It carries out the reaction L-aspartyl-tRNA(Asn) + L-glutamine + ATP + H2O = L-asparaginyl-tRNA(Asn) + L-glutamate + ADP + phosphate + 2 H(+). Allows the formation of correctly charged Asn-tRNA(Asn) or Gln-tRNA(Gln) through the transamidation of misacylated Asp-tRNA(Asn) or Glu-tRNA(Gln) in organisms which lack either or both of asparaginyl-tRNA or glutaminyl-tRNA synthetases. The reaction takes place in the presence of glutamine and ATP through an activated phospho-Asp-tRNA(Asn) or phospho-Glu-tRNA(Gln). The chain is Aspartyl/glutamyl-tRNA(Asn/Gln) amidotransferase subunit C from Desulfotalea psychrophila (strain LSv54 / DSM 12343).